The chain runs to 251 residues: Ubiquinone/menaquinone biosynthesis C-methyltransferase UbiE (251 aa).

S-adenosyl-L-methionine is bound by residues T74, D95, and 123-124 (NA).

This sequence belongs to the class I-like SAM-binding methyltransferase superfamily. MenG/UbiE family.

The enzyme catalyses a 2-demethylmenaquinol + S-adenosyl-L-methionine = a menaquinol + S-adenosyl-L-homocysteine + H(+). It carries out the reaction a 2-methoxy-6-(all-trans-polyprenyl)benzene-1,4-diol + S-adenosyl-L-methionine = a 5-methoxy-2-methyl-3-(all-trans-polyprenyl)benzene-1,4-diol + S-adenosyl-L-homocysteine + H(+). It functions in the pathway quinol/quinone metabolism; menaquinone biosynthesis; menaquinol from 1,4-dihydroxy-2-naphthoate: step 2/2. Its pathway is cofactor biosynthesis; ubiquinone biosynthesis. Methyltransferase required for the conversion of demethylmenaquinol (DMKH2) to menaquinol (MKH2) and the conversion of 2-polyprenyl-6-methoxy-1,4-benzoquinol (DDMQH2) to 2-polyprenyl-3-methyl-6-methoxy-1,4-benzoquinol (DMQH2). The sequence is that of Ubiquinone/menaquinone biosynthesis C-methyltransferase UbiE from Marinomonas sp. (strain MWYL1).